A 310-amino-acid polypeptide reads, in one-letter code: Transcription initiation factor IIB (310 aa).

The segment at 9–41 (EKETKCPECGSDDLRGDYERAEIVCGKCGLVID) adopts a TFIIB-type zinc-finger fold. Residues cysteine 14, cysteine 17, cysteine 33, and cysteine 36 each contribute to the Zn(2+) site. 2 tandem repeats follow at residues 127-210 (SELD…TREL) and 221-302 (DYVP…ELTE).

The protein belongs to the TFIIB family.

Its function is as follows. Stabilizes TBP binding to an archaeal box-A promoter. Also responsible for recruiting RNA polymerase II to the pre-initiation complex (DNA-TBP-TFIIB). In Methanothermobacter thermautotrophicus (strain ATCC 29096 / DSM 1053 / JCM 10044 / NBRC 100330 / Delta H) (Methanobacterium thermoautotrophicum), this protein is Transcription initiation factor IIB.